The following is a 137-amino-acid chain: Putative pre-16S rRNA nuclease (137 aa).

This sequence belongs to the YqgF nuclease family.

Its subcellular location is the cytoplasm. In terms of biological role, could be a nuclease involved in processing of the 5'-end of pre-16S rRNA. The chain is Putative pre-16S rRNA nuclease from Clostridium kluyveri (strain NBRC 12016).